A 243-amino-acid chain; its full sequence is Type III pantothenate kinase (243 aa).

Residue Asp6–Lys13 participates in ATP binding. Substrate is bound by residues Tyr86 and Gly93–Arg96. The active-site Proton acceptor is the Asp95. Position 116 (Asp116) interacts with K(+). Thr119 is a binding site for ATP. Position 171 (Thr171) interacts with substrate.

The protein belongs to the type III pantothenate kinase family. Homodimer. It depends on NH4(+) as a cofactor. The cofactor is K(+).

The protein resides in the cytoplasm. The enzyme catalyses (R)-pantothenate + ATP = (R)-4'-phosphopantothenate + ADP + H(+). The protein operates within cofactor biosynthesis; coenzyme A biosynthesis; CoA from (R)-pantothenate: step 1/5. Functionally, catalyzes the phosphorylation of pantothenate (Pan), the first step in CoA biosynthesis. This chain is Type III pantothenate kinase, found in Bacteroides fragilis (strain YCH46).